Reading from the N-terminus, the 149-residue chain is Ribonuclease pancreatic (149 aa).

Positions 1–25 (MGLEKSFILFSLLVLVLGWVQPSLS) are cleaved as a signal peptide. A compositionally biased stretch (basic and acidic residues) spans 30–40 (ADKFKRQHMDT). The segment at 30 to 49 (ADKFKRQHMDTEGSSNSSPT) is disordered. Positions 32 and 35 each coordinate substrate. The active-site Proton acceptor is the H37. Cystine bridges form between C51–C109, C65–C120, C83–C135, and C90–C97. N-linked (GlcNAc...) asparagine glycosylation is present at N62. 66–70 (KPVNT) provides a ligand contact to substrate. An N-linked (GlcNAc...) asparagine glycan is attached at N87. Positions 91 and 110 each coordinate substrate. H144 functions as the Proton donor in the catalytic mechanism.

This sequence belongs to the pancreatic ribonuclease family. In terms of assembly, monomer. Interacts with and forms tight 1:1 complexes with RNH1. Dimerization of two such complexes may occur. Interaction with RNH1 inhibits this protein. As to expression, pancreas.

The protein localises to the secreted. The enzyme catalyses an [RNA] containing cytidine + H2O = an [RNA]-3'-cytidine-3'-phosphate + a 5'-hydroxy-ribonucleotide-3'-[RNA].. It carries out the reaction an [RNA] containing uridine + H2O = an [RNA]-3'-uridine-3'-phosphate + a 5'-hydroxy-ribonucleotide-3'-[RNA].. Endonuclease that catalyzes the cleavage of RNA on the 3' side of pyrimidine nucleotides. Acts on single-stranded and double-stranded RNA. The chain is Ribonuclease pancreatic (RNASE1) from Niviventer cremoriventer (Dark-tailed tree rat).